The chain runs to 667 residues: Protein angel homolog 1 (667 aa).

Residues Ser-77 and Ser-105 each carry the phosphoserine modification.

The protein belongs to the CCR4/nocturin family.

The polypeptide is Protein angel homolog 1 (Mus musculus (Mouse)).